The chain runs to 301 residues: Transcriptional activator FeaR (301 aa).

Positions 199-299 (QKVVTLIDDN…GMTPGEYRRK (101 aa)) constitute an HTH araC/xylS-type domain. 2 DNA-binding regions (H-T-H motif) span residues 217–238 (EWIA…ADKG) and 266–289 (LAGI…KQRF).

Its function is as follows. Positive regulator of tynA/maoA and feaB/padA, the genes for 2-phenylethylamine catabolism. The protein is Transcriptional activator FeaR (feaR) of Escherichia coli (strain K12).